A 49-amino-acid polypeptide reads, in one-letter code: Large ribosomal subunit protein bL33 (49 aa).

The protein belongs to the bacterial ribosomal protein bL33 family.

In Pelotomaculum thermopropionicum (strain DSM 13744 / JCM 10971 / SI), this protein is Large ribosomal subunit protein bL33.